The sequence spans 1063 residues: Error-prone DNA polymerase (1063 aa).

It belongs to the DNA polymerase type-C family. DnaE2 subfamily.

Its subcellular location is the cytoplasm. The enzyme catalyses DNA(n) + a 2'-deoxyribonucleoside 5'-triphosphate = DNA(n+1) + diphosphate. Its function is as follows. DNA polymerase involved in damage-induced mutagenesis and translesion synthesis (TLS). It is not the major replicative DNA polymerase. The protein is Error-prone DNA polymerase of Burkholderia mallei (strain ATCC 23344).